Here is a 387-residue protein sequence, read N- to C-terminus: Alkanesulfonate monooxygenase (387 aa).

The protein belongs to the SsuD family.

It carries out the reaction an alkanesulfonate + FMNH2 + O2 = an aldehyde + FMN + sulfite + H2O + 2 H(+). Catalyzes the desulfonation of aliphatic sulfonates. This Xanthomonas axonopodis pv. citri (strain 306) protein is Alkanesulfonate monooxygenase.